A 290-amino-acid polypeptide reads, in one-letter code: Fructose-1,6-bisphosphatase class 1 (290 aa).

Mg(2+) contacts are provided by Glu-78, Asp-96, Leu-98, and Asp-99. Substrate contacts are provided by residues 99–102, Tyr-201, and Lys-226; that span reads DGSS. Glu-232 lines the Mg(2+) pocket.

It belongs to the FBPase class 1 family. As to quaternary structure, homotetramer. The cofactor is Mg(2+).

It localises to the cytoplasm. It catalyses the reaction beta-D-fructose 1,6-bisphosphate + H2O = beta-D-fructose 6-phosphate + phosphate. It functions in the pathway carbohydrate biosynthesis; gluconeogenesis. The protein is Fructose-1,6-bisphosphatase class 1 of Helicobacter pylori (strain ATCC 700392 / 26695) (Campylobacter pylori).